The following is a 497-amino-acid chain: Transmembrane protein 200A (497 aa).

Over 1-61 (MIATGGVITG…RGKIRLYSAS (61 aa)) the chain is Cytoplasmic. Residues 20-30 (TRSQYHLSAQS) are compositionally biased toward polar residues. Residues 20–44 (TRSQYHLSAQSPGPAPEKKTTKRKP) form a disordered region. A helical membrane pass occupies residues 62–82 (GFFLVLGVLILMAGIAMAVLG). The Extracellular segment spans residues 83–127 (YWPHKDQPKAPETKMSANNTQSFGREQAGSIAQFLEQHMHSEKMK). A glycan (N-linked (GlcNAc...) asparagine) is linked at Asn100. A helical transmembrane segment spans residues 128–148 (MLGPFTMGIGIFIFICANAIL). Residues 149–497 (HENRDRETKV…LKRGTSETRF (349 aa)) are Cytoplasmic-facing. A compositionally biased stretch (low complexity) spans 353-375 (SNSATESASSTSSRSSLSPGSTS). Disordered regions lie at residues 353–385 (SNSA…GAAR) and 400–438 (HSKS…GYTR). Residues 427-438 (RLDRSNSKGYTR) show a composition bias toward basic and acidic residues.

Belongs to the TMEM200 family.

It is found in the membrane. The sequence is that of Transmembrane protein 200A (tmem200a) from Danio rerio (Zebrafish).